The sequence spans 169 residues: ATP synthase subunit b, sodium ion specific (169 aa).

Residues 5–27 (SFISLDWGVVFQIVNTIVMYLIL) traverse the membrane as a helical segment.

It belongs to the ATPase B chain family. As to quaternary structure, F-type ATPases have 2 components, F(1) - the catalytic core - and F(0) - the membrane proton channel. F(1) has five subunits: alpha(3), beta(3), gamma(1), delta(1), epsilon(1). F(0) has three main subunits: a(1), b(2) and c(10-14). The alpha and beta chains form an alternating ring which encloses part of the gamma chain. F(1) is attached to F(0) by a central stalk formed by the gamma and epsilon chains, while a peripheral stalk is formed by the delta and b chains.

It is found in the cell membrane. Functionally, f(1)F(0) ATP synthase produces ATP from ADP in the presence of a proton or sodium gradient. F-type ATPases consist of two structural domains, F(1) containing the extramembraneous catalytic core and F(0) containing the membrane proton channel, linked together by a central stalk and a peripheral stalk. During catalysis, ATP synthesis in the catalytic domain of F(1) is coupled via a rotary mechanism of the central stalk subunits to proton translocation. In terms of biological role, component of the F(0) channel, it forms part of the peripheral stalk, linking F(1) to F(0). Its function is as follows. In this organism this enzyme may function as an ATP-driven Na(+) ion pump to generate a Na(+) ion electrochemical gradient rather than as an ATP synthase. The polypeptide is ATP synthase subunit b, sodium ion specific (atpF) (Clostridium paradoxum).